A 224-amino-acid polypeptide reads, in one-letter code: Peroxiredoxin-6 (224 aa).

Positions 5–169 constitute a Thioredoxin domain; that stretch reads LLLGDEAPNF…ILRVIISLQL (165 aa). Residues 31 to 40 form a required and sufficient for targeting to lysosomes and lamellar bodies region; that stretch reads DSWGILFSHP. Position 44 is a phosphothreonine (threonine 44). Catalysis depends on cysteine 47, which acts as the Cysteine sulfenic acid (-SOH) intermediate; for peroxidase activity. An N6-acetyllysine modification is found at lysine 63. Residue tyrosine 89 is modified to Phosphotyrosine. Aspartate 140 (for phospholipase activity) is an active-site residue. Threonine 177 is subject to Phosphothreonine; by MAPK. Lysine 209 is subject to N6-acetyllysine; alternate. Lysine 209 carries the post-translational modification N6-succinyllysine; alternate.

Belongs to the peroxiredoxin family. Prx6 subfamily. Homodimer. Interacts with GSTP1; mediates PRDX6 glutathionylation and regeneration. Interacts with APEX1. Interacts with STH. May interact with FAM168B. May interact with HTR2A. Irreversibly inactivated by overoxidation of Cys-47 to sulfinic acid (Cys-SO(2)H) and sulfonic acid (Cys-SO(3)H) forms upon oxidative stress. In terms of processing, phosphorylation at Thr-177 by MAP kinases increases the phospholipase activity of the enzyme. The phosphorylated form exhibits a greater lysophosphatidylcholine acyltransferase activity compared to the non-phosphorylated form.

It localises to the cytoplasm. It is found in the lysosome. It catalyses the reaction a hydroperoxide + 2 glutathione = an alcohol + glutathione disulfide + H2O. The enzyme catalyses a 1,2-diacyl-sn-glycero-3-phosphocholine + H2O = a 1-acyl-sn-glycero-3-phosphocholine + a fatty acid + H(+). It carries out the reaction a 1-acyl-sn-glycero-3-phosphocholine + an acyl-CoA = a 1,2-diacyl-sn-glycero-3-phosphocholine + CoA. The catalysed reaction is 1-hexadecanoyl-sn-glycero-3-phosphocholine + hexadecanoyl-CoA = 1,2-dihexadecanoyl-sn-glycero-3-phosphocholine + CoA. It catalyses the reaction 1,2-dihexadecanoyl-sn-glycero-3-phosphocholine + H2O = 1-hexadecanoyl-sn-glycero-3-phosphocholine + hexadecanoate + H(+). Its function is as follows. Thiol-specific peroxidase that catalyzes the reduction of hydrogen peroxide and organic hydroperoxides to water and alcohols, respectively. Can reduce H(2)O(2) and short chain organic, fatty acid, and phospholipid hydroperoxides. Also has phospholipase activity, and can therefore either reduce the oxidized sn-2 fatty acyl group of phospholipids (peroxidase activity) or hydrolyze the sn-2 ester bond of phospholipids (phospholipase activity). These activities are dependent on binding to phospholipids at acidic pH and to oxidized phospholipds at cytosolic pH. Plays a role in cell protection against oxidative stress by detoxifying peroxides and in phospholipid homeostasis. Exhibits acyl-CoA-dependent lysophospholipid acyltransferase which mediates the conversion of lysophosphatidylcholine (1-acyl-sn-glycero-3-phosphocholine or LPC) into phosphatidylcholine (1,2-diacyl-sn-glycero-3-phosphocholine or PC). Shows a clear preference for LPC as the lysophospholipid and for palmitoyl CoA as the fatty acyl substrate. This chain is Peroxiredoxin-6 (PRDX6), found in Sus scrofa (Pig).